The following is a 271-amino-acid chain: Phosphatidylinositol transfer protein beta isoform (271 aa).

Position 215 is an N6-acetyllysine (Lys-215). Ser-262 is modified (phosphoserine; by PKC).

It belongs to the PtdIns transfer protein family. PI transfer class I subfamily. Constitutive phosphorylation of Ser-262 has no effect on phospholipid transfer activity but is required for Golgi targeting.

The protein resides in the golgi apparatus. Its subcellular location is the golgi apparatus membrane. It localises to the endoplasmic reticulum membrane. The catalysed reaction is a 1,2-diacyl-sn-glycero-3-phosphocholine(in) = a 1,2-diacyl-sn-glycero-3-phosphocholine(out). It catalyses the reaction a 1,2-diacyl-sn-glycero-3-phospho-(1D-myo-inositol)(in) = a 1,2-diacyl-sn-glycero-3-phospho-(1D-myo-inositol)(out). It carries out the reaction an N-(acyl)-sphingosylphosphocholine(in) = an N-(acyl)-sphingosylphosphocholine(out). Its function is as follows. Catalyzes the transfer of phosphatidylinositol, phosphatidylcholine and sphingomyelin between membranes. Required for COPI-mediated retrograde transport from the Golgi to the endoplasmic reticulum; phosphatidylinositol and phosphatidylcholine transfer activity is essential for this function. This Mus musculus (Mouse) protein is Phosphatidylinositol transfer protein beta isoform (Pitpnb).